A 352-amino-acid chain; its full sequence is A-type ATP synthase subunit C (352 aa).

Belongs to the V-ATPase V0D/AC39 subunit family. Has multiple subunits with at least A(3), B(3), C, D, E, F, H, I and proteolipid K(x).

It localises to the cell membrane. In terms of biological role, component of the A-type ATP synthase that produces ATP from ADP in the presence of a proton gradient across the membrane. The chain is A-type ATP synthase subunit C from Halobacterium salinarum (strain ATCC 29341 / DSM 671 / R1).